We begin with the raw amino-acid sequence, 383 residues long: Probable transcriptional repressor C1348.12 (383 aa).

A DNA-binding region (zn(2)-C6 fungal-type) is located at residues 34-60; the sequence is CVICRSKKQKCDGQLPCLYCKKYEYQC.

The protein localises to the nucleus. In terms of biological role, probable transcriptional repressor of multidrug resistance genes. This chain is Probable transcriptional repressor C1348.12, found in Schizosaccharomyces pombe (strain 972 / ATCC 24843) (Fission yeast).